Reading from the N-terminus, the 737-residue chain is ARMADILLO BTB ARABIDOPSIS PROTEIN 1 (737 aa).

9 ARM repeats span residues 112 to 154, 165 to 212, 215 to 254, 257 to 296, 299 to 338, 341 to 380, 382 to 421, 456 to 495, and 497 to 536; these read DENV…KDCA, PGYQ…NIAH, PRIK…TVSF, DENK…NLVH, PDIK…QFAA, SDCK…RLAQ, AHNQ…GLAD, LKRL…HLCD, and KDGK…ELAK. Residues 568 to 635 enclose the BTB domain; sequence SDVTFLIDGK…IYSGRINIAK (68 aa).

In terms of assembly, forms a heterodimeric complex with TCP24. Interacts with the origin recognition complex (preRC) components ORC1A, ORC1B, CDT1A and CDT1B. Interacts with DUF7/AIP1. As to expression, weakly expressed in the emerging lateral roots and mainly expressed in the shoot apex, young leaves and flower buds.

The protein resides in the nucleus. Its pathway is protein modification; protein ubiquitination. In terms of biological role, may act as a substrate-specific adapter of an E3 ubiquitin-protein ligase complex (CUL3-RBX1-BTB) which mediates the ubiquitination and subsequent proteasomal degradation of target proteins. In association with TCP24, exerts a negative role in cell proliferation in leaves, possibly by inhibiting mitotic DNA replication. The chain is ARMADILLO BTB ARABIDOPSIS PROTEIN 1 (ABAP1) from Arabidopsis thaliana (Mouse-ear cress).